A 70-amino-acid chain; its full sequence is Large ribosomal subunit protein bL31 (70 aa).

Residues C16, C18, C37, and C40 each coordinate Zn(2+).

The protein belongs to the bacterial ribosomal protein bL31 family. Type A subfamily. As to quaternary structure, part of the 50S ribosomal subunit. Zn(2+) serves as cofactor.

In terms of biological role, binds the 23S rRNA. The sequence is that of Large ribosomal subunit protein bL31 from Salmonella agona (strain SL483).